Consider the following 888-residue polypeptide: C2H2 zinc finger transcription factor sltA (888 aa).

Disordered stretches follow at residues 1–78 (MSTS…QRSP), 132–176 (IDSQ…SSEN), and 388–407 (RSSMPSNREPAQNGAKASAP). Composition is skewed to polar residues over residues 23–32 (PSLSASTSIE), 167–176 (GLGTSLSSEN), and 388–397 (RSSMPSNREP). C2H2-type zinc fingers lie at residues 500-522 (QKCKDCDKVFKRPCDLTKHEKTH) and 561-586 (YKCKFAPCTYSSKRESNCKQHMEKAH). The disordered stretch occupies residues 589–663 (DYVRSKHNGR…PTQTGSGDFP (75 aa)). Over residues 602–632 (KASNGATPQTPSIATPSSKAQGITTPLTGSE) the composition is skewed to polar residues.

The protein localises to the nucleus. Its function is as follows. Transcription factor that contributes to azole resistance by coregulating the expression of the drug target erg11A and the drug efflux pump mdr1. Binds to the 5'-AGGCA-3' motif in the promoters of ergosterol biosynthesis and drug pump genes to regulate their expression. Is able to interact with the promoters of sltA, sltB, erg11A, erg13A, erg24A, mdr1, abcE and mfsC. Involved in antifungal drug resistance to azoles, terbinafine, and simvastatin but not amphotericin B or caspofungin. This is C2H2 zinc finger transcription factor sltA from Aspergillus fumigatus (strain CBS 144.89 / FGSC A1163 / CEA10) (Neosartorya fumigata).